The primary structure comprises 344 residues: MGQYTINLRESYPVWKIGSKIDSTKEECLDYMLFIASPLLAGQATTLGVAIRRTLLESIQGTAIVAAKIYGAAHEYSTLEGIQESIHDILLNLKQVIIKNKICEFQKCLISIIGPKKVTAADIELSQNITISNPYHHIATITKPIRFQVELIINKGRGYLIQDGNDVQDGYFPVDALFNPVRNVNFSIHNLAEQQEALILEIWTNGAITPLDALRQGSENLIHLFLPPFGLEDDTYMTSLGSQDYNIHIKNSLKEKFELHSIERIEDSHLIKDQFLEYSKTPIELLELSTRPFKCLKNANIYTINDLLKLSQQDLLKISNMGPSSVKQIVEALDKRFGINLKLK.

The segment at 1–232 (MGQYTINLRE…HLFLPPFGLE (232 aa)) is alpha N-terminal domain (alpha-NTD). The interval 270–344 (LIKDQFLEYS…KRFGINLKLK (75 aa)) is alpha C-terminal domain (alpha-CTD).

This sequence belongs to the RNA polymerase alpha chain family. As to quaternary structure, in plastids the minimal PEP RNA polymerase catalytic core is composed of four subunits: alpha, beta, beta', and beta''. When a (nuclear-encoded) sigma factor is associated with the core the holoenzyme is formed, which can initiate transcription.

The protein localises to the plastid. The protein resides in the chloroplast. The enzyme catalyses RNA(n) + a ribonucleoside 5'-triphosphate = RNA(n+1) + diphosphate. Functionally, DNA-dependent RNA polymerase catalyzes the transcription of DNA into RNA using the four ribonucleoside triphosphates as substrates. This Spirogyra maxima (Green alga) protein is DNA-directed RNA polymerase subunit alpha.